The chain runs to 191 residues: Protein DMP10 (191 aa).

Helical transmembrane passes span 15 to 35 (FANL…PSFS), 48 to 68 (LLTI…SFTD), 114 to 134 (LSFV…ALAV), and 158 to 178 (LMIK…FAIF).

The protein belongs to the plant DMP1 protein family. As to expression, restricted to flowers.

Its subcellular location is the membrane. Functionally, involved in membrane remodeling. This chain is Protein DMP10, found in Arabidopsis thaliana (Mouse-ear cress).